The following is a 317-amino-acid chain: Ribonuclease Z (317 aa).

7 residues coordinate Zn(2+): His63, His65, Asp67, His68, His143, Asp213, and His273. Asp67 serves as the catalytic Proton acceptor.

This sequence belongs to the RNase Z family. As to quaternary structure, homodimer. It depends on Zn(2+) as a cofactor.

It carries out the reaction Endonucleolytic cleavage of RNA, removing extra 3' nucleotides from tRNA precursor, generating 3' termini of tRNAs. A 3'-hydroxy group is left at the tRNA terminus and a 5'-phosphoryl group is left at the trailer molecule.. In terms of biological role, zinc phosphodiesterase, which displays some tRNA 3'-processing endonuclease activity. Probably involved in tRNA maturation, by removing a 3'-trailer from precursor tRNA. In Methanocaldococcus jannaschii (strain ATCC 43067 / DSM 2661 / JAL-1 / JCM 10045 / NBRC 100440) (Methanococcus jannaschii), this protein is Ribonuclease Z.